A 324-amino-acid polypeptide reads, in one-letter code: Dermonecrotic toxin Hl-PLD1 (324 aa).

A signal peptide spans 1 to 35 (MAHCYYNSKRGCNRVMKTVALVVLISTVMVEESRG). The active site involves histidine 50. The Mg(2+) site is built by glutamate 70 and aspartate 72. Catalysis depends on histidine 86, which acts as the Nucleophile. 2 disulfide bridges follow: cysteine 90–cysteine 96 and cysteine 92–cysteine 236. Residue aspartate 130 coordinates Mg(2+).

Belongs to the arthropod phospholipase D family. Class II subfamily. Requires Mg(2+) as cofactor. In terms of tissue distribution, expressed by the venom gland.

It is found in the secreted. The catalysed reaction is an N-(acyl)-sphingosylphosphocholine = an N-(acyl)-sphingosyl-1,3-cyclic phosphate + choline. It catalyses the reaction an N-(acyl)-sphingosylphosphoethanolamine = an N-(acyl)-sphingosyl-1,3-cyclic phosphate + ethanolamine. It carries out the reaction a 1-acyl-sn-glycero-3-phosphocholine = a 1-acyl-sn-glycero-2,3-cyclic phosphate + choline. The enzyme catalyses a 1-acyl-sn-glycero-3-phosphoethanolamine = a 1-acyl-sn-glycero-2,3-cyclic phosphate + ethanolamine. Dermonecrotic toxins cleave the phosphodiester linkage between the phosphate and headgroup of certain phospholipids (sphingolipid and lysolipid substrates), forming an alcohol (often choline) and a cyclic phosphate. This toxin acts on sphingomyelin (SM) with a high activity. It may also act on ceramide phosphoethanolamine (CPE), lysophosphatidylcholine (LPC) and lysophosphatidylethanolamine (LPE), but not on lysophosphatidylserine (LPS), and lysophosphatidylglycerol (LPG). It acts by transphosphatidylation, releasing exclusively cyclic phosphate products as second products. In vivo, shows dermonecrotic activity when intradermally injected into rabbit skin and is lethal to mice. Induces increased vascular permeability, edema, inflammatory response, and platelet aggregation. Does not show hemolytic activity (at up to 50 ug). This Hemiscorpius lepturus (Scorpion) protein is Dermonecrotic toxin Hl-PLD1.